A 469-amino-acid polypeptide reads, in one-letter code: Ribulose bisphosphate carboxylase large chain (469 aa).

A propeptide spanning residues 1–2 (MS) is cleaved from the precursor. The residue at position 3 (Pro-3) is an N-acetylproline. Lys-14 carries the post-translational modification N6,N6,N6-trimethyllysine. The substrate site is built by Asn-123 and Thr-173. Lys-175 acts as the Proton acceptor in catalysis. Lys-177 serves as a coordination point for substrate. Positions 201, 203, and 204 each coordinate Mg(2+). At Lys-201 the chain carries N6-carboxylysine. The Proton acceptor role is filled by His-294. Substrate is bound by residues Arg-295, His-327, and Ser-379.

This sequence belongs to the RuBisCO large chain family. Type I subfamily. As to quaternary structure, heterohexadecamer of 8 large chains and 8 small chains; disulfide-linked. The disulfide link is formed within the large subunit homodimers. It depends on Mg(2+) as a cofactor. The disulfide bond which can form in the large chain dimeric partners within the hexadecamer appears to be associated with oxidative stress and protein turnover.

The protein resides in the plastid. It localises to the chloroplast. It carries out the reaction 2 (2R)-3-phosphoglycerate + 2 H(+) = D-ribulose 1,5-bisphosphate + CO2 + H2O. It catalyses the reaction D-ribulose 1,5-bisphosphate + O2 = 2-phosphoglycolate + (2R)-3-phosphoglycerate + 2 H(+). Its function is as follows. RuBisCO catalyzes two reactions: the carboxylation of D-ribulose 1,5-bisphosphate, the primary event in carbon dioxide fixation, as well as the oxidative fragmentation of the pentose substrate in the photorespiration process. Both reactions occur simultaneously and in competition at the same active site. This Atriplex patula (Common orache) protein is Ribulose bisphosphate carboxylase large chain.